Here is a 94-residue protein sequence, read N- to C-terminus: Small ribosomal subunit protein bS20c (94 aa).

The protein belongs to the bacterial ribosomal protein bS20 family.

It is found in the plastid. Its subcellular location is the chloroplast. In terms of biological role, binds directly to 16S ribosomal RNA. The polypeptide is Small ribosomal subunit protein bS20c (Porphyra purpurea (Red seaweed)).